The primary structure comprises 517 residues: Phospholipase C C (517 aa).

A signal peptide (tat-type signal) is located at residues 1-39; the sequence is MVSQGAFAGMSRRAFLAKAAGAGAAAVLTDWAAPVIEKA.

This sequence belongs to the bacterial phospholipase C family. In terms of processing, predicted to be exported by the Tat system. The position of the signal peptide cleavage has not been experimentally proven.

It localises to the secreted. Its subcellular location is the cell wall. It carries out the reaction a 1,2-diacyl-sn-glycero-3-phosphocholine + H2O = phosphocholine + a 1,2-diacyl-sn-glycerol + H(+). The enzyme catalyses 1,2-dihexadecanoyl-sn-glycero-3-phosphocholine + H2O = 1,2-dihexadecanoyl-sn-glycerol + phosphocholine + H(+). Functionally, involved in virulence. Induces cytotoxic effects on mouse macrophage cell lines, via direct or indirect enzymatic hydrolysis of cell membrane phospholipids. Hydrolyzes phosphatidylcholine. Does not have hemolytic activity. The sequence is that of Phospholipase C C from Mycobacterium tuberculosis (strain ATCC 25618 / H37Rv).